We begin with the raw amino-acid sequence, 208 residues long: V-type ATP synthase subunit D (208 aa).

It belongs to the V-ATPase D subunit family.

Functionally, produces ATP from ADP in the presence of a proton gradient across the membrane. This Streptococcus pyogenes serotype M6 (strain ATCC BAA-946 / MGAS10394) protein is V-type ATP synthase subunit D.